The primary structure comprises 250 residues: Prophage antitermination protein Q homolog QuuQ (250 aa).

It belongs to the phage antitermination Q type 2 family.

Functionally, positively regulate expression of some phage genes. Bacterial host RNA polymerase modified by antitermination proteins transcribes through termination sites that otherwise prevent expression of the regulated genes. In Escherichia coli (strain K12), this protein is Prophage antitermination protein Q homolog QuuQ (quuQ).